The chain runs to 85 residues: Turripeptide PaIAa (85 aa).

The protein belongs to the turripeptide family. In terms of tissue distribution, expressed by the venom duct.

The protein resides in the secreted. Its function is as follows. Is lethal to drosophila larvae. The polypeptide is Turripeptide PaIAa (Polystira albida (White giant-turris)).